A 325-amino-acid chain; its full sequence is Putative [LysW]-lysine/[LysW]-ornithine hydrolase (325 aa).

Residue His-66 coordinates Zn(2+). Asp-68 is a catalytic residue. Residue Asp-90 participates in Zn(2+) binding. Glu-117 acts as the Proton acceptor in catalysis. Positions 118, 139, and 297 each coordinate Zn(2+).

This sequence belongs to the peptidase M20A family. LysK subfamily. Requires Zn(2+) as cofactor. It depends on Co(2+) as a cofactor.

It localises to the cytoplasm. It carries out the reaction [amino-group carrier protein]-C-terminal-gamma-(L-lysyl)-L-glutamate + H2O = [amino-group carrier protein]-C-terminal-L-glutamate + L-lysine. It catalyses the reaction [amino-group carrier protein]-C-terminal-gamma-(L-ornithyl)-L-glutamate + H2O = [amino-group carrier protein]-C-terminal-L-glutamate + L-ornithine. It functions in the pathway amino-acid biosynthesis; L-lysine biosynthesis via AAA pathway; L-lysine from L-alpha-aminoadipate (Thermus route): step 5/5. It participates in amino-acid biosynthesis; L-arginine biosynthesis. In terms of biological role, catalyzes the release of L-lysine from [LysW]-gamma-L-lysine and the release of L-ornithine from [LysW]-L-ornithine. This Pyrococcus horikoshii (strain ATCC 700860 / DSM 12428 / JCM 9974 / NBRC 100139 / OT-3) protein is Putative [LysW]-lysine/[LysW]-ornithine hydrolase.